The sequence spans 273 residues: 4-hydroxy-tetrahydrodipicolinate reductase (273 aa).

NAD(+) contacts are provided by residues 10–15 (GAGGRM), glutamate 36, 100–102 (GTT), and 124–127 (SGNM). The active-site Proton donor/acceptor is histidine 157. Histidine 158 is a binding site for (S)-2,3,4,5-tetrahydrodipicolinate. Lysine 161 serves as the catalytic Proton donor. 167–168 (GT) contacts (S)-2,3,4,5-tetrahydrodipicolinate.

The protein belongs to the DapB family.

Its subcellular location is the cytoplasm. It carries out the reaction (S)-2,3,4,5-tetrahydrodipicolinate + NAD(+) + H2O = (2S,4S)-4-hydroxy-2,3,4,5-tetrahydrodipicolinate + NADH + H(+). The catalysed reaction is (S)-2,3,4,5-tetrahydrodipicolinate + NADP(+) + H2O = (2S,4S)-4-hydroxy-2,3,4,5-tetrahydrodipicolinate + NADPH + H(+). The protein operates within amino-acid biosynthesis; L-lysine biosynthesis via DAP pathway; (S)-tetrahydrodipicolinate from L-aspartate: step 4/4. In terms of biological role, catalyzes the conversion of 4-hydroxy-tetrahydrodipicolinate (HTPA) to tetrahydrodipicolinate. This Rhodopseudomonas palustris (strain BisA53) protein is 4-hydroxy-tetrahydrodipicolinate reductase.